A 201-amino-acid polypeptide reads, in one-letter code: Ras-related protein Rab-1B (201 aa).

Position 1 is an N-acetylmethionine (methionine 1). The GTP site is built by serine 17, glycine 18, valine 19, glycine 20, lysine 21, serine 22, cysteine 23, tyrosine 33, threonine 34, glutamate 35, serine 36, serine 39, and threonine 40. Serine 22 lines the Mg(2+) pocket. Positions 30–45 (DDTYTESYISTIGVDF) match the Switch 1 motif. Mg(2+) contacts are provided by threonine 40 and aspartate 63. The tract at residues 64–83 (TAGQERFRTITSSYYRGAHG) is switch 2 region; required for interaction with REP1/CHM. A Switch 2 motif is present at residues 65-80 (AGQERFRTITSSYYRG). Glycine 66 provides a ligand contact to GTP. Serine 76 bears the (Microbial infection) O-(2-cholinephosphoryl)serine mark. A (Microbial infection) O-AMP-tyrosine modification is found at tyrosine 77. Positions 121, 122, 124, 151, 152, and 153 each coordinate GTP. Residues 174–201 (GPGAASGGERPNLKIDSTPVKPAGGGCC) form a disordered region. S-geranylgeranyl cysteine attachment occurs at residues cysteine 200 and cysteine 201. Cysteine 201 is modified (cysteine methyl ester).

This sequence belongs to the small GTPase superfamily. Rab family. As to quaternary structure, interacts with MICAL1 and MICAL2. Interacts (in GTP-bound form) with MICALCL, MICAL1 and MILCAL3. Interacts with GDI1; the interaction requires the GDP-bound state. Interacts with CHM/REP1; the interaction requires the GDP-bound form and is necessary for prenylation by GGTase II. Interacts with RabGAP TBC1D20. Interacts (in GDP-bound form) with lipid phosphatase MTMR6 (via GRAM domain); the interaction regulates MTMR6 recruitment to the endoplasmic reticulum-Golgi intermediate compartment. Interacts (in GDP-bound form) with lipid phosphatase MTMR7. (Microbial infection) Interacts with L.pneumophila AnkX. Interacts with L.pneumophila Lem3. Interacts with L.pneumophila SidD. Interacts with L.pneumophila DrrA. Mg(2+) serves as cofactor. In terms of processing, prenylated; by GGTase II, only after interaction of the substrate with Rab escort protein 1 (REP1). (Microbial infection) AMPylation at Tyr-77 by L.pneumophila DrrA occurs in the switch 2 region and leads to moderate inactivation of the GTPase activity. It appears to prolong the lifetime of the GTP state of RAB1B by restricting access of GTPase effectors to switch 2 and blocking effector-stimulated GTP hydrolysis, thereby rendering RAB1B constitutively active. It is later de-AMPylated by L.pneumophila SidD, releasing RAB1B from bacterial phagosomes. Post-translationally, (Microbial infection) Phosphocholinated at Ser-76 by L.pneumophila AnkX, leading to displace GDP dissociation inhibitors (GDI). Both GDP-bound and GTP-bound forms can be phosphocholinated. Dephosphocholinated by L.pneumophila Lem3, restoring accessibility to L.pneumophila GTPase effector LepB. In terms of processing, (Microbial infection) Glycosylated by S.typhimurium protein Ssek3: arginine GlcNAcylation prevents GTPase activity, thereby disrupting vesicular protein transport from the endoplasmic reticulum (ER) to the Golgi compartment.

The protein localises to the cytoplasm. It localises to the membrane. The protein resides in the preautophagosomal structure membrane. Its subcellular location is the perinuclear region. It catalyses the reaction GTP + H2O = GDP + phosphate + H(+). Its activity is regulated as follows. Regulated by guanine nucleotide exchange factors (GEFs) which promote the exchange of bound GDP for free GTP. Regulated by GTPase activating proteins (GAPs) including TBC1D20 which increases the GTP hydrolysis activity. Inhibited by GDP dissociation inhibitors (GDIs). In terms of biological role, the small GTPases Rab are key regulators of intracellular membrane trafficking, from the formation of transport vesicles to their fusion with membranes. Rabs cycle between an inactive GDP-bound form and an active GTP-bound form that is able to recruit to membranes different set of downstream effectors directly responsible for vesicle formation, movement, tethering and fusion. Plays a role in the initial events of the autophagic vacuole development which take place at specialized regions of the endoplasmic reticulum. Regulates vesicular transport between the endoplasmic reticulum and successive Golgi compartments. Required to modulate the compacted morphology of the Golgi. Promotes the recruitment of lipid phosphatase MTMR6 to the endoplasmic reticulum-Golgi intermediate compartment. This is Ras-related protein Rab-1B from Homo sapiens (Human).